The chain runs to 158 residues: Transcription elongation factor GreA (158 aa).

The protein belongs to the GreA/GreB family.

Necessary for efficient RNA polymerase transcription elongation past template-encoded arresting sites. The arresting sites in DNA have the property of trapping a certain fraction of elongating RNA polymerases that pass through, resulting in locked ternary complexes. Cleavage of the nascent transcript by cleavage factors such as GreA or GreB allows the resumption of elongation from the new 3'terminus. GreA releases sequences of 2 to 3 nucleotides. The protein is Transcription elongation factor GreA of Rhizobium johnstonii (strain DSM 114642 / LMG 32736 / 3841) (Rhizobium leguminosarum bv. viciae).